The primary structure comprises 467 residues: Bifunctional protein GlmU (467 aa).

The segment at 1 to 229 (MEKNTIILAA…FSESMGVNDR (229 aa)) is pyrophosphorylase. UDP-N-acetyl-alpha-D-glucosamine-binding positions include 8 to 11 (LAAG), K22, Q72, 77 to 78 (GT), 100 to 102 (SGD), G139, E154, N169, and N227. D102 serves as a coordination point for Mg(2+). N227 provides a ligand contact to Mg(2+). The tract at residues 230 to 250 (LALSKATKVMQRRINEEHMVN) is linker. Positions 251-467 (GVTIIDPENT…ALKAEEENNK (217 aa)) are N-acetyltransferase. UDP-N-acetyl-alpha-D-glucosamine-binding residues include R332 and K350. Catalysis depends on H362, which acts as the Proton acceptor. The UDP-N-acetyl-alpha-D-glucosamine site is built by Y365 and N376. Residues 385–386 (NY), S404, A422, and R439 each bind acetyl-CoA.

This sequence in the N-terminal section; belongs to the N-acetylglucosamine-1-phosphate uridyltransferase family. The protein in the C-terminal section; belongs to the transferase hexapeptide repeat family. As to quaternary structure, homotrimer. Requires Mg(2+) as cofactor.

Its subcellular location is the cytoplasm. The enzyme catalyses alpha-D-glucosamine 1-phosphate + acetyl-CoA = N-acetyl-alpha-D-glucosamine 1-phosphate + CoA + H(+). The catalysed reaction is N-acetyl-alpha-D-glucosamine 1-phosphate + UTP + H(+) = UDP-N-acetyl-alpha-D-glucosamine + diphosphate. It functions in the pathway nucleotide-sugar biosynthesis; UDP-N-acetyl-alpha-D-glucosamine biosynthesis; N-acetyl-alpha-D-glucosamine 1-phosphate from alpha-D-glucosamine 6-phosphate (route II): step 2/2. It participates in nucleotide-sugar biosynthesis; UDP-N-acetyl-alpha-D-glucosamine biosynthesis; UDP-N-acetyl-alpha-D-glucosamine from N-acetyl-alpha-D-glucosamine 1-phosphate: step 1/1. Its pathway is bacterial outer membrane biogenesis; LPS lipid A biosynthesis. In terms of biological role, catalyzes the last two sequential reactions in the de novo biosynthetic pathway for UDP-N-acetylglucosamine (UDP-GlcNAc). The C-terminal domain catalyzes the transfer of acetyl group from acetyl coenzyme A to glucosamine-1-phosphate (GlcN-1-P) to produce N-acetylglucosamine-1-phosphate (GlcNAc-1-P), which is converted into UDP-GlcNAc by the transfer of uridine 5-monophosphate (from uridine 5-triphosphate), a reaction catalyzed by the N-terminal domain. The protein is Bifunctional protein GlmU of Pediococcus pentosaceus (strain ATCC 25745 / CCUG 21536 / LMG 10740 / 183-1w).